The chain runs to 636 residues: ATP-dependent zinc metalloprotease FtsH (636 aa).

Over methionine 1–methionine 12 the chain is Cytoplasmic. The chain crosses the membrane as a helical span at residues glycine 13–isoleucine 33. The Periplasmic segment spans residues arginine 34 to leucine 104. Residues leucine 105–phenylalanine 125 form a helical membrane-spanning segment. Over methionine 126 to glutamate 636 the chain is Cytoplasmic. Glycine 197–threonine 204 is an ATP binding site. Residue histidine 419 participates in Zn(2+) binding. The active site involves glutamate 420. 2 residues coordinate Zn(2+): histidine 423 and aspartate 497.

This sequence in the central section; belongs to the AAA ATPase family. It in the C-terminal section; belongs to the peptidase M41 family. In terms of assembly, homohexamer. Requires Zn(2+) as cofactor.

Its subcellular location is the cell inner membrane. In terms of biological role, acts as a processive, ATP-dependent zinc metallopeptidase for both cytoplasmic and membrane proteins. Plays a role in the quality control of integral membrane proteins. The chain is ATP-dependent zinc metalloprotease FtsH from Neorickettsia risticii (strain Illinois).